The following is a 193-amino-acid chain: Annexin-2 receptor (193 aa).

Residues 78 to 87 (QSTLEPSTAK) are compositionally biased toward polar residues. Residues 78–111 (QSTLEPSTAKPTEFSWPGTQKQQEAPVEEVGQAE) are disordered.

As to expression, widely expressed. Highly expressed in lymphocytes. Expressed in both resting CD4(+) and CD8(+) T-cells.

Functionally, may act as a receptor for annexin II on marrow stromal cells to induce osteoclast formation. The sequence is that of Annexin-2 receptor (ANXA2R) from Homo sapiens (Human).